A 128-amino-acid chain; its full sequence is Photosystem II reaction center Psb28 protein (128 aa).

Positions 109-128 are disordered; it reads SGLGYSQDSGEAPASDSSNG. Residues 111–128 show a composition bias toward polar residues; sequence LGYSQDSGEAPASDSSNG.

This sequence belongs to the Psb28 family. Part of the photosystem II complex.

The protein localises to the cellular thylakoid membrane. The chain is Photosystem II reaction center Psb28 protein from Synechococcus sp. (strain CC9311).